A 411-amino-acid chain; its full sequence is Bestrophin homolog 26 (411 aa).

Transmembrane regions (helical) follow at residues 30 to 50 (FTAIFKELCLFLGLYFLFMVI), 73 to 93 (SHQEFTIPLEFLLGFFVSSVV), 235 to 255 (IPIPLAYPQAVFLAVRCYFAV), and 272 to 292 (TWITFFPVLTTFQYIFMMGWM).

The protein belongs to the anion channel-forming bestrophin (TC 1.A.46) family. Calcium-sensitive chloride channel subfamily. As to quaternary structure, forms oligomers.

The protein resides in the cell membrane. Functionally, forms chloride channels. This chain is Bestrophin homolog 26 (best-26), found in Caenorhabditis elegans.